The following is a 376-amino-acid chain: Protein RecA (376 aa).

78-85 contacts ATP; the sequence is GPESSGKT. The disordered stretch occupies residues 355–376; it reads PVELVPNVDFDDEADTEADAED. Over residues 363–376 the composition is skewed to acidic residues; it reads DFDDEADTEADAED.

This sequence belongs to the RecA family.

It is found in the cytoplasm. Its function is as follows. Can catalyze the hydrolysis of ATP in the presence of single-stranded DNA, the ATP-dependent uptake of single-stranded DNA by duplex DNA, and the ATP-dependent hybridization of homologous single-stranded DNAs. It interacts with LexA causing its activation and leading to its autocatalytic cleavage. This is Protein RecA from Corynebacterium glutamicum (strain R).